The primary structure comprises 319 residues: 1-aminocyclopropane-1-carboxylate oxidase 1 (319 aa).

The region spanning 153–253 (PNFGTKVSNY…RMSLASFYNP (101 aa)) is the Fe2OG dioxygenase domain. Positions 177, 179, and 234 each coordinate Fe cation.

This sequence belongs to the iron/ascorbate-dependent oxidoreductase family. Fe cation is required as a cofactor.

The catalysed reaction is 1-aminocyclopropane-1-carboxylate + L-ascorbate + O2 = ethene + L-dehydroascorbate + hydrogen cyanide + CO2 + 2 H2O. The protein operates within alkene biosynthesis; ethylene biosynthesis via S-adenosyl-L-methionine; ethylene from S-adenosyl-L-methionine: step 2/2. The chain is 1-aminocyclopropane-1-carboxylate oxidase 1 (ACO1) from Petunia hybrida (Petunia).